A 1041-amino-acid polypeptide reads, in one-letter code: Desmoglein-4 (1041 aa).

The signal sequence occupies residues 1–23 (MDWLLFRNICLLILFMVVLGVNS). Residues 24–49 (EFIVEVKELDIENGTTTWQTVRRQKR) constitute a propeptide that is removed on maturation. Cadherin domains follow at residues 50-157 (EWIK…PPVF), 158-269 (TQNV…FPIL), 270-385 (EKTS…GPTF), and 389-497 (SMTF…CPVI). The Extracellular segment spans residues 50–634 (EWIKFAAACR…RQSNVGLGPA (585 aa)). The N-linked (GlcNAc...) asparagine glycan is linked to Asn-110. N-linked (GlcNAc...) asparagine glycosylation occurs at Asn-545. A helical transmembrane segment spans residues 635 to 655 (GIGMIILGLLLLLLSPLLLLM). Residues 656-1041 (CCCKRRQPEG…RYSNMHYSRQ (386 aa)) lie on the Cytoplasmic side of the membrane. Desmoglein repeat repeat units lie at residues 884–910 (TLSE…IVTE) and 911–941 (TYTT…ETVM). Residues 1014–1041 (ISQTTGSTSPMTSQHRVTRYSNMHYSRQ) are disordered.

In terms of assembly, interacts with JUP. In terms of tissue distribution, strongly expressed in the skin; during the anagen stage of hair follicles in the matrix, precortex and inner rooth sheath.

It localises to the cell membrane. The protein resides in the cell junction. Its subcellular location is the desmosome. Its function is as follows. A component of desmosome cell-cell junctions which are required for positive regulation of cellular adhesion. Coordinates the transition from proliferation to differentiation in hair follicle keratinocytes. Plays a role in moderating lymphocyte migration to inflamed skin and maintaining homeostasis of the epidermal inflammatory response. The protein is Desmoglein-4 (Dsg4) of Mus musculus (Mouse).